Here is a 180-residue protein sequence, read N- to C-terminus: MTSSVELAQTKPLFRVLLLKGFVFYVVAFETEEESSEAELPLVYLHDFELNINKRGKIEASYVDFMSCMTRLKPSSVSYTRVSSEKSSEDFSLPGSGKTFGSKVLNRKVTFTFENGVQLVFGMYGLEQRCVSSDYLWFENVFVGAHCGTLTYCLNCELDKSGGELEILTFSKNEVLLKRW.

Interacts with Hsp70h.

It is found in the virion. Involved in systemic transport. Necessary for long-distance transport of the virus through the phloem. This is 20 kDa protein from Beet yellows virus (isolate Ukraine) (BYV).